Here is a 449-residue protein sequence, read N- to C-terminus: Nucleoprotein (449 aa).

The tract at residues 1 to 55 (MSFTPGKQSSSRASSGNRSGNGILKWADQSDQSRNVQTRGRRVQSKQTATSQQPS) is disordered. Over residues 9–22 (SSSRASSGNRSGNG) the composition is skewed to low complexity. Composition is skewed to polar residues over residues 29-38 (QSDQSRNVQT) and 45-55 (SKQTATSQQPS). Residues 52-194 (QQPSGGTVVP…GYYIEGSGRS (143 aa)) are RNA-binding. Residues 61 to 190 (PYYSWFSGIT…VLPQGYYIEG (130 aa)) form the CoV N NTD domain. 3 residues coordinate RNA: Arg-106, Arg-122, and Arg-164. Disordered stretches follow at residues 158 to 231 (PADI…VTPD), 266 to 297 (ILNK…NFGG), and 387 to 449 (MMNI…TSEI). The residue at position 167 (Ser-167) is a Phosphoserine; by host. Thr-174 carries the post-translational modification Phosphothreonine; by host. Ser-191 carries the phosphoserine; by host modification. Composition is skewed to polar residues over residues 194–204 (SAPNSRSTSRA) and 212–227 (GSRS…STPG). One can recognise a CoV N CTD domain in the interval 259–384 (AKEVRQKILN…QNLNAYQHQE (126 aa)). A compositionally biased stretch (basic residues) spans 266–276 (ILNKPRQKRSP). The tract at residues 266 to 385 (ILNKPRQKRS…NLNAYQHQED (120 aa)) is dimerization. At Ser-391 the chain carries Phosphoserine; by host. A compositionally biased stretch (polar residues) spans 400 to 410 (QKNGQVENDNI). A compositionally biased stretch (basic and acidic residues) spans 423-440 (KSRELTAEDISLLKKMDE). Phosphoserine; by host is present on Ser-424. Phosphothreonine; by host is present on Thr-428.

Belongs to the betacoronavirus nucleocapsid protein family. As to quaternary structure, homooligomer. Both monomeric and oligomeric forms interact with RNA. Interacts with protein M. Interacts with NSP3; this interaction serves to tether the genome to the newly translated replicase-transcriptase complex at a very early stage of infection. ADP-ribosylated. The ADP-ribosylation is retained in the virion during infection. Post-translationally, phosphorylated on serine and threonine residues.

The protein resides in the virion. Its subcellular location is the host endoplasmic reticulum-Golgi intermediate compartment. The protein localises to the host Golgi apparatus. In terms of biological role, packages the positive strand viral genome RNA into a helical ribonucleocapsid (RNP) and plays a fundamental role during virion assembly through its interactions with the viral genome and membrane protein M. Plays an important role in enhancing the efficiency of subgenomic viral RNA transcription as well as viral replication. The polypeptide is Nucleoprotein (Sus scrofa (Pig)).